A 162-amino-acid chain; its full sequence is F protein (162 aa).

Positions 1-23 are disordered; sequence MSTNPKPQKKKTNVTPTVAHRTS. The segment covering 13–23 has biased composition (polar residues); it reads NVTPTVAHRTS.

It localises to the host cytoplasm. The protein resides in the host perinuclear region. The chain is F protein from Hepatitis C virus genotype 1a (isolate 1) (HCV).